The following is a 441-amino-acid chain: Methionine aminopeptidase 2A (441 aa).

Residues 1–103 (MAIGNPEVAT…SGDFPQGEIQ (103 aa)) are disordered. Residues 18–33 (AESSNGNESQLSSDLT) are compositionally biased toward polar residues. A compositionally biased stretch (basic and acidic residues) spans 37 to 62 (DLAEVKEDEKDNNQEEEDGLKAEAST). The segment covering 63–76 (KKKKKKSKSKKKKS) has biased composition (basic residues). Histidine 194 lines the substrate pocket. Positions 214, 225, and 294 each coordinate a divalent metal cation. Histidine 302 provides a ligand contact to substrate. 2 residues coordinate a divalent metal cation: glutamate 327 and glutamate 422.

Belongs to the peptidase M24A family. Methionine aminopeptidase eukaryotic type 2 subfamily. It depends on Co(2+) as a cofactor. The cofactor is Zn(2+). Mn(2+) serves as cofactor. Fe(2+) is required as a cofactor. Ubiquitous. Preferentially expressed in roots.

It is found in the cytoplasm. It catalyses the reaction Release of N-terminal amino acids, preferentially methionine, from peptides and arylamides.. Cotranslationally removes the N-terminal methionine from nascent proteins. The N-terminal methionine is often cleaved when the second residue in the primary sequence is small and uncharged (Met-Ala-, Cys, Gly, Pro, Ser, Thr, or Val). This chain is Methionine aminopeptidase 2A, found in Arabidopsis thaliana (Mouse-ear cress).